The primary structure comprises 312 residues: D-alanine--D-alanine ligase (312 aa).

In terms of domain architecture, ATP-grasp spans 108-308 (KLVWQQTGIP…YSELVVKVLS (201 aa)). 138–193 (VAKLGMPLFVKPASEGSSVAVEKVKSADALPAALEEAAKHDKIVIVEKSIEGGGEY) contacts ATP. 3 residues coordinate Mg(2+): Asp262, Glu275, and Asn277.

This sequence belongs to the D-alanine--D-alanine ligase family. Mg(2+) serves as cofactor. Requires Mn(2+) as cofactor.

The protein resides in the cytoplasm. It catalyses the reaction 2 D-alanine + ATP = D-alanyl-D-alanine + ADP + phosphate + H(+). It functions in the pathway cell wall biogenesis; peptidoglycan biosynthesis. In terms of biological role, cell wall formation. The sequence is that of D-alanine--D-alanine ligase from Burkholderia thailandensis (strain ATCC 700388 / DSM 13276 / CCUG 48851 / CIP 106301 / E264).